Consider the following 363-residue polypeptide: MIIDTTEVQAINSFSRSESLKEGYGLIGMLVPIFTPVSGITIGVLVIVWLEREISAGIQQRIGPEYAGPLGILQALADGTKLLFKEDLLPSRGDIRLFSIGPSIAVISILLSYSVIPFGYRLVLADLSIGVFLWIAISSIAPIGLLMSGYGSNNKYSFSGGLRAAAQSISYEIPLTPCVLSISLLSNSSSTIDIVEAQSKYGFWGWNLWRQPIGFIVFIISSLAECERLPFDLPEAEEELVAGYQTEYSGIKFGLFYVASYLNLLVSSLFVTVLYLGGWNLSIPYIFIPELFGINKTGGVFGTTIGILITLAKAYLFLFIPITTRWTLPRMRMDQLLNLGWKFLLPISLGNLLLTTSSQLLSL.

The next 6 helical transmembrane spans lie at 30 to 50 (LVPI…IVWL), 98 to 118 (FSIG…VIPF), 127 to 147 (LSIG…GLLM), 248 to 268 (YSGI…LVSS), 300 to 320 (VFGT…FLFI), and 336 to 356 (LLNL…LLTT).

It belongs to the complex I subunit 1 family. NDH is composed of at least 16 different subunits, 5 of which are encoded in the nucleus.

It localises to the plastid. Its subcellular location is the chloroplast thylakoid membrane. It carries out the reaction a plastoquinone + NADH + (n+1) H(+)(in) = a plastoquinol + NAD(+) + n H(+)(out). It catalyses the reaction a plastoquinone + NADPH + (n+1) H(+)(in) = a plastoquinol + NADP(+) + n H(+)(out). In terms of biological role, NDH shuttles electrons from NAD(P)H:plastoquinone, via FMN and iron-sulfur (Fe-S) centers, to quinones in the photosynthetic chain and possibly in a chloroplast respiratory chain. The immediate electron acceptor for the enzyme in this species is believed to be plastoquinone. Couples the redox reaction to proton translocation, and thus conserves the redox energy in a proton gradient. The polypeptide is NAD(P)H-quinone oxidoreductase subunit 1, chloroplastic (Drimys granadensis).